Consider the following 858-residue polypeptide: Autoinducer 2 sensor kinase/phosphatase LuxQ (858 aa).

The next 2 helical transmembrane spans lie at 14–34 and 362–382; these read STLI…GIFV and LFNF…LIQI. A Histidine kinase domain is found at 488–710; that stretch reads KMSHEIRTPI…TFVVTLPVKD (223 aa). H491 bears the Phosphohistidine; by autocatalysis mark. In terms of domain architecture, Response regulatory spans 735–850; that stretch reads KVLLVEDNHT…ALHEAFVDFK (116 aa). The residue at position 784 (D784) is a 4-aspartylphosphate.

In terms of assembly, binds the complex formed by the autoinducer and LuxP.

Its subcellular location is the cell inner membrane. It catalyses the reaction ATP + protein L-histidine = ADP + protein N-phospho-L-histidine.. At low cell density, in absence of autoinducer has a kinase activity, and autophosphorylates on a histidine residue. The phosphoryl group is then transferred to an aspartate residue in the response regulator domain. The phosphoryl group is transferred to LuxU, and ultimately to LuxO. At high cell density, in the presence of autoinducer, the kinase activity is inactivated, and the response regulator domain has a phosphatase activity. In Vibrio parahaemolyticus serotype O3:K6 (strain RIMD 2210633), this protein is Autoinducer 2 sensor kinase/phosphatase LuxQ (luxQ).